Reading from the N-terminus, the 72-residue chain is uncharacterized protein (72 aa).

Belongs to the asfivirus I73R family.

Its subcellular location is the virion. This is an uncharacterized protein from Ornithodoros (relapsing fever ticks).